Here is a 227-residue protein sequence, read N- to C-terminus: Glutathione S-transferase U13 (227 aa).

The GST N-terminal domain occupies 5–86; it reads DTVKLIGSWS…YVDEAWPSVP (82 aa). Residues 15 to 16, 43 to 44, 57 to 58, and 70 to 71 contribute to the glutathione site; these read SP, EK, KV, and ES. The GST C-terminal domain maps to 92–224; that stretch reads DAYDRASARF…EVVAFAKQKF (133 aa). Thr-158 is modified (phosphothreonine).

It belongs to the GST superfamily. Tau family.

It localises to the cytoplasm. Its subcellular location is the cytosol. The enzyme catalyses RX + glutathione = an S-substituted glutathione + a halide anion + H(+). Functionally, in vitro, possesses glutathione S-transferase activity toward 1-chloro-2,4-dinitrobenzene (CDNB) and benzyl isothiocyanate (BITC). May be involved in the conjugation of reduced glutathione to a wide number of exogenous and endogenous hydrophobic electrophiles and have a detoxification role against certain herbicides. This is Glutathione S-transferase U13 (GSTU13) from Arabidopsis thaliana (Mouse-ear cress).